Here is a 1358-residue protein sequence, read N- to C-terminus: Insulin-like growth factor 1 receptor (1358 aa).

The signal sequence occupies residues 1-25; that stretch reads MKAELVPVCTAWILGLLLCLGPAAA. Cys-28 and Cys-47 form a disulfide bridge. Asn-74, Asn-99, and Asn-132 each carry an N-linked (GlcNAc...) asparagine glycan. Disulfide bonds link Cys-147–Cys-175, Cys-179–Cys-202, Cys-189–Cys-208, Cys-212–Cys-221, Cys-216–Cys-227, Cys-228–Cys-236, Cys-232–Cys-245, Cys-248–Cys-257, Cys-261–Cys-273, Cys-279–Cys-299, Cys-303–Cys-317, Cys-320–Cys-324, and Cys-328–Cys-347. N-linked (GlcNAc...) asparagine glycosylation occurs at Asn-241. A glycan (N-linked (GlcNAc...) asparagine) is linked at Asn-310. 2 N-linked (GlcNAc...) asparagine glycosylation sites follow: Asn-411 and Asn-432. Residues Cys-449 and Cys-482 are joined by a disulfide bond. Fibronectin type-III domains lie at 483 to 603, 604 to 702, 727 to 818, and 829 to 924; these read ESHV…TDAA, VPSI…TEAE, PRPN…FVFA, and IPGI…LKPD. N-linked (GlcNAc...) asparagine glycosylation is found at Asn-488, Asn-528, Asn-616, Asn-634, and Asn-669. A disordered region spans residues 670–691; it reads GTIDTEGGTEPTKPEGSVGEKG. Topologically, residues 735–934 are extracellular; that stretch reads DVLAVGNSTV…VRNNILQMVV (200 aa). Asn-741, Asn-750, Asn-758, Asn-895, and Asn-908 each carry an N-linked (GlcNAc...) asparagine glycan. Residues 935 to 955 traverse the membrane as a helical segment; the sequence is AIPLALSFLLVGIISIVCFVF. Over 956 to 1358 the chain is Cytoplasmic; it reads KKRNSNRLGN…ALPLPQSSAC (403 aa). Tyr-976 is modified (phosphotyrosine; by autocatalysis). A Protein kinase domain is found at 995 to 1270; it reads ITMNRELGQG…SIKDELDPGF (276 aa). ATP contacts are provided by residues 1001 to 1009 and Lys-1029; that span reads LGQGSFGMV. Residue Asp-1131 is the Proton acceptor of the active site. A phosphotyrosine; by autocatalysis mark is found at Tyr-1157, Tyr-1161, and Tyr-1162. The segment at 1336–1358 is disordered; sequence PYAHMNGGRKNERALPLPQSSAC.

Belongs to the protein kinase superfamily. Tyr protein kinase family. Insulin receptor subfamily. Tetramer of 2 alpha and 2 beta chains linked by disulfide bonds. The alpha chains contribute to the formation of the ligand-binding domain, while the beta chain carries the kinase domain. Mn(2+) is required as a cofactor. In terms of processing, the cytoplasmic domain of the beta subunit is autophosphorylated on Tyr residues in response to low concentrations of insulin-like growth factor (IGF1) and higher concentrations of insulin.

The protein localises to the cell membrane. The enzyme catalyses L-tyrosyl-[protein] + ATP = O-phospho-L-tyrosyl-[protein] + ADP + H(+). Its activity is regulated as follows. Autophosphorylation activates the kinase activity. Functionally, this receptor binds insulin-like growth factor 1 (IGF1) with a high affinity and IGF2 with a lower affinity. It has a tyrosine-protein kinase activity, which is necessary for the activation of the IGF1-stimulated downstream signaling cascade. Plays a role in oocyte maturation. Promotes head development by inhibiting Wnt signaling during embryogenesis. The chain is Insulin-like growth factor 1 receptor (igf1r) from Xenopus laevis (African clawed frog).